Consider the following 360-residue polypeptide: 3-dehydroquinate synthase (360 aa).

NAD(+) contacts are provided by residues 104-108 (GVIGD), 128-129 (TT), K141, and 168-171 (FLDT). Zn(2+)-binding residues include E183, H243, and H260.

Belongs to the sugar phosphate cyclases superfamily. Dehydroquinate synthase family. The cofactor is Co(2+). Zn(2+) is required as a cofactor. NAD(+) serves as cofactor.

The protein resides in the cytoplasm. It catalyses the reaction 7-phospho-2-dehydro-3-deoxy-D-arabino-heptonate = 3-dehydroquinate + phosphate. The protein operates within metabolic intermediate biosynthesis; chorismate biosynthesis; chorismate from D-erythrose 4-phosphate and phosphoenolpyruvate: step 2/7. Its function is as follows. Catalyzes the conversion of 3-deoxy-D-arabino-heptulosonate 7-phosphate (DAHP) to dehydroquinate (DHQ). This chain is 3-dehydroquinate synthase, found in Streptococcus equi subsp. equi (strain 4047).